A 785-amino-acid chain; its full sequence is MQQKVLSALEFHKVKEQVIGHAASSLGKEMLLELKPSASIDEIKKQLDEVDEASDIIRLRGQAPFGGLVDIRGALRRAEIGSVLSPSEFTEISGLLYAVKQMKHFITQMAEDGVDIPLIHQHAEQLITLSDLERDINSCIDDHGEVLDHASETLRGIRTQLRTLESRVRDRLESMLRSSSASKMLSDTIVTIRNDRFVIPVKQEYRSSYGGIVHDTSSSGATLFIEPQAIVDMNNSLQQAKVKEKQEIERILRVLTEKTAEYTEELFLDLQVLQTLDFIFAKARYAKAVKATKPIMNDTGFIRLKKARHPLLPPDQVVANDIELGRDFSTIVITGPNTGGKTVTLKTLGLLTLMAQSGLHIPADEGSEAAVFEHVFADIGDEQSIEQSLSTFSSHMVNIVGILEQVNENSLVLFDELGAGTDPQEGAALAMSILDDVHRTNARVLATTHYPELKAYGYNREGVMNASVEFDIETLSPTYKLLIGVPGRSNAFEISKRLGLPDHIIGQAKSEMTAEHNEVDTMIASLEQSKKRAEEELSETESIRKEAEKLHKELQQQIIELNSKKDKMLEEAEQQAAEKVKAAMKEAEDIIHELRTIKEEHKSFKDHELINAKKRLEGAMPAFEKSKKPEKPKTQKRDFKPGDEVKVLTFGQKGTLLEKTGGNEWNVQIGILKMKVKEKDLEFIKSAPEPKKEKMITAVKGKDYHVSLELDLRGERYENALSRVEKYLDDAVLAGYPRVSIIHGKGTGALRKGVQDLLKNHRSVKSSRFGEAGEGGSGVTVVELK.

335–342 provides a ligand contact to ATP; that stretch reads GPNTGGKT. Residues 513–586 adopt a coiled-coil conformation; it reads TAEHNEVDTM…AEKVKAAMKE (74 aa). The segment at 636-785 is partially complements a deletion for mitomycin C (MMC) resistance and for chromosomal DNA transformation; sequence KRDFKPGDEV…GSGVTVVELK (150 aa). The KOW region stretch occupies residues 641 to 681; the sequence is PGDEVKVLTFGQKGTLLEKTGGNEWNVQIGILKMKVKEKDL. Positions 710-785 constitute a Smr domain; the sequence is LDLRGERYEN…GSGVTVVELK (76 aa).

Belongs to the DNA mismatch repair MutS family. MutS2 subfamily. As to quaternary structure, binds to ribosomes as a homodimer. Binds to stalled/collided disomes, association is greater in (ribosome-targeted) antibiotic-treated cells (with increased stalling at specific mRNA sites). The clamp domain of one monomer binds the A-site finger, the 23S rRNA of the central protuberance and ribosomal protein uL5 of the leading (stalled) ribosome, while the other monomer binds in a gap between the ribosomal central protuberance and the L1 stalk of the leading ribosome.

Its subcellular location is the cytoplasm. Acts as a ribosome collision sensor splitting the ribosome into its 2 subunits. Detects stalled/collided disomes (pairs of ribosomes where the leading ribosome is stalled and a second ribosome has collided with it) which it binds and splits, by an ATP-hydrolysis driven conformational change. Does not seem to have endoribonuclease activity (in the context of ribosome stalling). Acts upstream of the ribosome quality control system (RQC), a ribosome-associated complex that mediates the extraction of incompletely synthesized nascent chains from stalled ribosomes and their subsequent degradation, probably generates substrates for RQC. Functionally, does not seem to be involved in mismatch repair or in the prevention of interspecific recombination during DNA transformation. Might be involved in homologous recombination. Putative endonuclease that may be involved in the suppression of homologous recombination and may therefore have a key role in the control of bacterial genetic diversity. In Bacillus subtilis (strain 168), this protein is Putative endonuclease MutS2.